The following is a 1757-amino-acid chain: E3 ubiquitin-protein ligase UBR1 (1757 aa).

The disordered stretch occupies residues 1 to 24 (MADEEMDGAERMDVSPEPPLAPQR). Ala-2 is modified (N-acetylalanine). Residues 97 to 168 (QLCGKVFKSG…TGPFCVDHEP (72 aa)) form a UBR-type zinc finger. Positions 99, 112, 115, 124, 127, 133, and 136 each coordinate Zn(2+). Phe-148 serves as a coordination point for a peptide. Residue Cys-149 participates in Zn(2+) binding. Asp-150 is an a peptide binding site. Position 151 (Cys-151) interacts with Zn(2+). An a peptide-binding site is contributed by Asp-153. Zn(2+)-binding residues include Cys-163 and His-166. The segment at 842–868 (QHSKAEHMQKKRRKQENKDEALPPPPP) is disordered. A UBC2-binding region (U2BR) region spans residues 1022 to 1057 (RKRKAEAARLHRQKIMAQMSALQKNFIETHKLMYDN). Cys-1101, Cys-1104, Cys-1162, His-1164, His-1167, and Cys-1170 together coordinate Zn(2+). The RING-type; atypical zinc finger occupies 1101 to 1204 (CILCQEEQEV…SGEYLCPLCK (104 aa)). Phosphoserine is present on Ser-1182. The Zn(2+) site is built by Cys-1200, Cys-1203, Cys-1635, Cys-1638, and Cys-1661.

The protein belongs to the E3 ubiquitin-protein ligase UBR1-like family. Interacts with RECQL4. Present in skeletal muscle and liver (at protein level). Broadly expressed, with highest levels in skeletal muscle and heart. Expressed in acinar cells of the pancreas. In testes, expressed primarily in spermatogonia.

It is found in the cytoplasm. The protein resides in the cytosol. The catalysed reaction is S-ubiquitinyl-[E2 ubiquitin-conjugating enzyme]-L-cysteine + [acceptor protein]-L-lysine = [E2 ubiquitin-conjugating enzyme]-L-cysteine + N(6)-ubiquitinyl-[acceptor protein]-L-lysine.. The protein operates within protein modification; protein ubiquitination. In terms of biological role, E3 ubiquitin-protein ligase which is a component of the N-end rule pathway. Recognizes and binds proteins bearing specific N-terminal residues (N-degrons) that are destabilizing according to the N-end rule, leading to their ubiquitination and subsequent degradation. Recognizes both type-1 and type-2 N-degrons, containing positively charged amino acids (Arg, Lys and His) and bulky and hydrophobic amino acids, respectively. Does not ubiquitinate proteins that are acetylated at the N-terminus. In contrast, it strongly binds methylated N-degrons. Binds leucine and is a negative regulator of the leucine-mTOR signaling pathway, thereby controlling cell growth. This Mus musculus (Mouse) protein is E3 ubiquitin-protein ligase UBR1.